The primary structure comprises 755 residues: 1,4-alpha-glucan branching enzyme GlgB (755 aa).

Asp435 serves as the catalytic Nucleophile. Glu488 (proton donor) is an active-site residue.

It belongs to the glycosyl hydrolase 13 family. GlgB subfamily. Monomer.

The catalysed reaction is Transfers a segment of a (1-&gt;4)-alpha-D-glucan chain to a primary hydroxy group in a similar glucan chain.. It functions in the pathway glycan biosynthesis; glycogen biosynthesis. Functionally, catalyzes the formation of the alpha-1,6-glucosidic linkages in glycogen by scission of a 1,4-alpha-linked oligosaccharide from growing alpha-1,4-glucan chains and the subsequent attachment of the oligosaccharide to the alpha-1,6 position. The chain is 1,4-alpha-glucan branching enzyme GlgB from Vibrio parahaemolyticus serotype O3:K6 (strain RIMD 2210633).